The chain runs to 564 residues: MFS-type transporter dmxR4 (564 aa).

Residues 1–61 (MSSERPDGSA…PAKEAPAKPA (61 aa)) form a disordered region. Positions 25–44 (TDSSRTSNDASQTSQDTAVQ) are enriched in polar residues. A compositionally biased stretch (basic and acidic residues) spans 47–57 (PPKEAPAKEAP). 5 consecutive transmembrane segments (helical) span residues 71 to 91 (IALLLGLILMSMFLVALDRSI), 106 to 126 (AGDIGWYGSAYLLTCCSFQLL), 138 to 158 (TVFVANLLLFEVASAICGAAP), 169 to 189 (LAGIGAAGIFAGTIIAMVFLI), and 199 to 219 (GLFGAVFGITSISGPLIGGGF). Asn-222 carries N-linked (GlcNAc...) asparagine glycosylation. A run of 7 helical transmembrane segments spans residues 227-247 (WCFYINLPIGGVALIAIALWM), 265-285 (GLDLLGTAVFIPCIICLLLAL), 299-319 (IIALLVVFSVTFVVYAALQAF), 348-368 (GVHLLPVMISMIVGSVTGGFF), 376-396 (SPLAVTGSTIMTIGAALIYTF), 405-425 (WIGSLILYGIGLGWSFQAPNL), and 438-458 (SALALIMFVGLLAQAVFVSVG). An N-linked (GlcNAc...) asparagine glycan is attached at Asn-469. The next 2 helical transmembrane spans lie at 470–490 (LSWIPGFTASELTSSGAVSFL) and 512–532 (VFMIGLVLCAVCVPGLASMEW). The interval 534–564 (SVKSRGSWDEKPAAKPTDKPTEEKKVPPEAV) is disordered. A compositionally biased stretch (basic and acidic residues) spans 539 to 564 (GSWDEKPAAKPTDKPTEEKKVPPEAV).

This sequence belongs to the major facilitator superfamily. TCR/Tet family.

The protein localises to the membrane. In terms of biological role, MFS-type transporter; part of the gene cluster that mediates the biosynthesis of the dimeric xanthones cryptosporioptides. This Cryptosporiopsis sp. (strain 8999) protein is MFS-type transporter dmxR4.